The sequence spans 185 residues: Ribosome-recycling factor (185 aa).

It belongs to the RRF family.

It localises to the cytoplasm. Functionally, responsible for the release of ribosomes from messenger RNA at the termination of protein biosynthesis. May increase the efficiency of translation by recycling ribosomes from one round of translation to another. This chain is Ribosome-recycling factor, found in Erwinia tasmaniensis (strain DSM 17950 / CFBP 7177 / CIP 109463 / NCPPB 4357 / Et1/99).